The chain runs to 330 residues: Carbonic anhydrase (330 aa).

A chloroplast transit peptide-like region spans residues 1–109 (MSAASAFAMN…AATRIDQITA (109 aa)).

Belongs to the beta-class carbonic anhydrase family.

It is found in the cytoplasm. It carries out the reaction hydrogencarbonate + H(+) = CO2 + H2O. In terms of biological role, reversible hydration of carbon dioxide. The polypeptide is Carbonic anhydrase (Flaveria bidentis (Coastal plain yellowtops)).